Reading from the N-terminus, the 347-residue chain is Zinc-type alcohol dehydrogenase-like protein C16A3.02c (347 aa).

Belongs to the zinc-containing alcohol dehydrogenase family. Quinone oxidoreductase subfamily.

The protein resides in the golgi apparatus. It localises to the endoplasmic reticulum. The chain is Zinc-type alcohol dehydrogenase-like protein C16A3.02c from Schizosaccharomyces pombe (strain 972 / ATCC 24843) (Fission yeast).